The following is a 323-amino-acid chain: Putative gluconeogenesis factor (323 aa).

This sequence belongs to the gluconeogenesis factor family.

It is found in the cytoplasm. Its function is as follows. Required for morphogenesis under gluconeogenic growth conditions. This chain is Putative gluconeogenesis factor, found in Thermoanaerobacterium thermosulfurigenes (Clostridium thermosulfurogenes).